The primary structure comprises 93 residues: UPF0473 protein CHY_0543 (93 aa).

This sequence belongs to the UPF0473 family.

This is UPF0473 protein CHY_0543 from Carboxydothermus hydrogenoformans (strain ATCC BAA-161 / DSM 6008 / Z-2901).